The sequence spans 368 residues: Histidinol-phosphate aminotransferase (368 aa).

K215 carries the N6-(pyridoxal phosphate)lysine modification.

Belongs to the class-II pyridoxal-phosphate-dependent aminotransferase family. Histidinol-phosphate aminotransferase subfamily. In terms of assembly, homodimer. Requires pyridoxal 5'-phosphate as cofactor.

It carries out the reaction L-histidinol phosphate + 2-oxoglutarate = 3-(imidazol-4-yl)-2-oxopropyl phosphate + L-glutamate. The protein operates within amino-acid biosynthesis; L-histidine biosynthesis; L-histidine from 5-phospho-alpha-D-ribose 1-diphosphate: step 7/9. This is Histidinol-phosphate aminotransferase from Buchnera aphidicola subsp. Acyrthosiphon pisum (strain 5A).